Reading from the N-terminus, the 569-residue chain is Atlastin-2 (569 aa).

The tract at residues M1 to P49 is N-terminal hypervariable region (HVR). The Cytoplasmic segment spans residues M1 to A464. Residues D80 to N324 enclose the GB1/RHD3-type G domain. Residues R93, K94, G95, K96, S97, F98, Q163, R232, and D233 each contribute to the GDP site. GTP-binding residues include R93, K94, G95, K96, S97, and F98. S97 contributes to the Mg(2+) binding site. GTP contacts are provided by R232 and D233. Positions L244–I272 form a coiled coil. 2 residues coordinate GDP: V291 and N294. V291 is a binding site for GTP. Residues M362–G453 form a 3HB (three-helix bundle) domain region. The tract at residues K454 to T462 is linker. A helical transmembrane segment spans residues T465–M485. The Lumenal segment spans residues N486–S487. A helical membrane pass occupies residues I488–Y508. Over V509–N569 the chain is Cytoplasmic. The autoinhibitory domain stretch occupies residues K535 to N569.

It belongs to the TRAFAC class dynamin-like GTPase superfamily. GB1/RHD3 GTPase family. GB1 subfamily. In terms of assembly, monomeric and homodimeric. The homodimer, transiently formed by two molecules on opposing membranes, is the active form mediating ER membrane fusion.

The protein localises to the endoplasmic reticulum membrane. It carries out the reaction GTP + H2O = GDP + phosphate + H(+). Atlastin-2 (ATL2) is a membrane-anchored GTPase that mediates the GTP-dependent fusion of endoplasmic reticulum (ER) membranes, maintaining the continuous ER network. It facilitates the formation of three-way junctions where ER tubules intersect. Two atlastin-2 on neighboring ER tubules bind GTP and form loose homodimers through the GB1/RHD3-type G domains and 3HB regions. Upon GTP hydrolysis, the 3HB regions tighten, pulling the membranes together to drive their fusion. After fusion, the homodimer disassembles upon release of inorganic phosphate (Pi). Subsequently, GDP dissociates, resetting the monomers to a conformation ready for a new fusion cycle. The polypeptide is Atlastin-2 (atl2) (Xenopus laevis (African clawed frog)).